The sequence spans 260 residues: PsbP domain-containing protein 4, chloroplastic (260 aa).

The protein belongs to the PsbP family.

The protein localises to the plastid. The protein resides in the chloroplast thylakoid lumen. This chain is PsbP domain-containing protein 4, chloroplastic (PPD4), found in Arabidopsis thaliana (Mouse-ear cress).